A 1075-amino-acid chain; its full sequence is Ataxin-2-like protein (1075 aa).

An N-acetylmethionine modification is found at Met-1. Residues Met-1–Gln-12 are compositionally biased toward low complexity. The interval Met-1–Glu-115 is disordered. Positions Ser-98–Ser-121 are interaction with MPL. 2 positions are modified to phosphoserine: Ser-103 and Ser-111. Tyr-118 carries the phosphotyrosine modification. In terms of domain architecture, Sm spans Arg-122 to Asp-199. Residue Lys-207 is modified to N6-acetyllysine. Ser-238 bears the Phosphoserine mark. Position 264 is a phosphotyrosine (Tyr-264). A Phosphoserine modification is found at Ser-306. Tyr-309 is subject to Phosphotyrosine. The segment covering Glu-316–Ser-328 has biased composition (basic and acidic residues). Disordered regions lie at residues Glu-316 to Gln-521, Gln-551 to Val-697, Val-733 to Ala-770, Ser-820 to Thr-849, Ala-865 to Pro-940, and Pro-1022 to Arg-1045. Residues Val-330–Leu-342 are compositionally biased toward polar residues. Ser-335 and Ser-339 each carry phosphoserine. Residue Lys-348 forms a Glycyl lysine isopeptide (Lys-Gly) (interchain with G-Cter in SUMO2) linkage. Tyr-349 is modified (phosphotyrosine). The residue at position 361 (Arg-361) is an Asymmetric dimethylarginine. Over residues Gly-363–Pro-380 the composition is skewed to low complexity. A phosphoserine mark is found at Ser-391 and Ser-409. The segment covering Thr-421 to Thr-433 has biased composition (polar residues). Ser-449 is subject to Phosphoserine. Low complexity-rich tracts occupy residues Pro-450 to Cys-462 and Val-471 to Ser-485. Residues Ser-493 and Ser-496 each carry the phosphoserine modification. Basic and acidic residues predominate over residues Asp-505–Arg-516. Phosphoserine occurs at positions 557, 558, 559, and 563. Over residues Ile-571 to Asp-584 the composition is skewed to basic and acidic residues. A Phosphoserine modification is found at Ser-594. Thr-632 carries the phosphothreonine modification. Phosphoserine is present on residues Ser-634, Ser-674, Ser-680, and Ser-684. Composition is skewed to low complexity over residues Ser-678–Ser-694 and Pro-761–Ala-770. Positions Gln-874–Ala-898 are enriched in polar residues. Composition is skewed to low complexity over residues Ser-931–Pro-940 and Gly-1025–Gly-1037.

The protein belongs to the ataxin-2 family. Interacts with MPL/TPOR and EPOR and dissociates after ligand stimulation. Interacts with DDX6, G3BP1, and ATXN2. Interacts with PRMT1. Interacts with CIC and ATXN1. In terms of processing, thrombopoietin triggers the phosphorylation on tyrosine residues in a way that is dependent on MPL C-terminal domain. Post-translationally, asymmetrically dimethylated. Probably methylated by PRMT1. In terms of tissue distribution, expressed at high levels in thymus, lymph node, spleen, fetal kidney and adult testis. Constitutively associated with MPL and EPOR in hematopoietic cells.

The protein localises to the membrane. Its subcellular location is the cytoplasm. It localises to the nucleus speckle. It is found in the cytoplasmic granule. Its function is as follows. Involved in the regulation of stress granule and P-body formation. This chain is Ataxin-2-like protein (ATXN2L), found in Homo sapiens (Human).